The chain runs to 1021 residues: Disease resistance protein Pikm2-TS (1021 aa).

Positions 1-182 (MELVVGASEA…PQIIGIKEPV (182 aa)) are structured coiled coil (CC) domain. The 334-residue stretch at 186–519 (TVMEELEVWL…WIAEGFANEK (334 aa)) folds into the NB-ARC domain. The segment at 297-317 (PENDGNPDNTPIRLQETTDDD) is disordered. LRR repeat units follow at residues 612-634 (LAQV…SFNY), 659-682 (MLLL…IQKL), and 683-705 (EYLE…IVQL). The segment at 719–751 (RKGLRLPQEKSKKPIKNPSPQGKTKEPAKKGFL) is disordered. LRR repeat units follow at residues 785–807 (LTGL…TFKQ), 817–841 (SCGL…DMPA), 843–865 (PRYL…ITSI), 866–888 (TTLN…ILHI), 912–935 (KDIL…GFKS), and 957–981 (MPAL…ILEN).

This sequence belongs to the disease resistance NB-LRR family. In terms of tissue distribution, constitutively expressed.

Disease resistance (R) protein. Resistance proteins guard the plant against pathogens that contain an appropriate avirulence protein via an indirect interaction with this avirulence protein. That triggers a defense system including the hypersensitive response, which restricts the pathogen growth. Contribution of Pikm-1 is required to recognize the effector avirulence protein AVR-Pik. The chain is Disease resistance protein Pikm2-TS from Oryza sativa subsp. japonica (Rice).